Reading from the N-terminus, the 201-residue chain is Recombination protein RecR (201 aa).

The C4-type zinc-finger motif lies at 57 to 72 (CECCRTLTEEPLCRIC). A Toprim domain is found at 81–176 (GVLCIVETPA…NTTRIAHGVP (96 aa)).

This sequence belongs to the RecR family.

May play a role in DNA repair. It seems to be involved in an RecBC-independent recombinational process of DNA repair. It may act with RecF and RecO. The sequence is that of Recombination protein RecR from Idiomarina loihiensis (strain ATCC BAA-735 / DSM 15497 / L2-TR).